The primary structure comprises 668 residues: MTVTYSSKVANATFFGFHRLLLKWRGSIYKLLYREFIVFAVLYTAISLVYRLLLTGVQKRYFEKLSIYCDRYAEQIPVTFVLGFYVTLVVNRWWNQFVNLPWPDRLMFLISSSVHGSDEHGRLLRRTLMRYVNLTSLLIFRSVSTAVYKRFPTMDHVVEAGFMTTDERKLFNHLKSPHLKYWVPFIWFGNLATKARNEGRIRDSVDLQSLMTEMNRYRSWCSLLFGYDWVGIPLVYTQVVTLAVYTFFFACLIGRQFLDPTKGYAGHDLDLYIPIFTLLQFFFYAGWLKVAEQLINPFGEDDDDFETNWCIDRNLQVSLLAVDEMHMSLPKMKKDIYWDDSAARPPYTLAAADYCIPSFLGSTVQMGLSGSDFPDEEWLWDYEKHGHRHSMIRRVKRFLSAHEHPSSPRRRSYRRQTSDSSMFLPRDDLSPARDLLDVPSRNPPRASPTWKKSCFPEGSPTLHFSMGELSTIRETSQTSTLQSLTPQSSVRTSPIKMPLVPEVLITAAEAPVPTSGGYHHDSATSILSSEFTGVQPSKTEQQQGPMGSILSPSEKETPPGGPSPQTVSASAEENIFNCEEDPGDTFLKRWSLPGFLGSSHTSLGNLSPDPMSSQPALLIDTETSSEISGINIVAGSRVSSDMLYLMENLDTKETDIIELNKETEESPK.

Over 1-31 (MTVTYSSKVANATFFGFHRLLLKWRGSIYKL) the chain is Cytoplasmic. A Ca(2+)-binding site is contributed by Ala10. Residues 32–51 (LYREFIVFAVLYTAISLVYR) traverse the membrane as a helical segment. Topologically, residues 52–60 (LLLTGVQKR) are extracellular. Residues 61–82 (YFEKLSIYCDRYAEQIPVTFVL) form a helical membrane-spanning segment. Over 83–237 (GFYVTLVVNR…DWVGIPLVYT (155 aa)) the chain is Cytoplasmic. Residues 238–255 (QVVTLAVYTFFFACLIGR) traverse the membrane as a helical segment. The Extracellular segment spans residues 256-274 (QFLDPTKGYAGHDLDLYIP). A helical transmembrane segment spans residues 275–288 (IFTLLQFFFYAGWL). Topologically, residues 289-668 (KVAEQLINPF…LNKETEESPK (380 aa)) are cytoplasmic. Ca(2+) contacts are provided by Gln293, Asn296, Asp301, and Asp304. Disordered stretches follow at residues 400-454 (SAHE…KKSC), 473-493 (RETS…VRTS), and 532-570 (TGVQ…VSAS). The span at 425 to 436 (PRDDLSPARDLL) shows a compositional bias: basic and acidic residues. Low complexity predominate over residues 475–489 (TSQTSTLQSLTPQSS). Over residues 532–545 (TGVQPSKTEQQQGP) the composition is skewed to polar residues.

This sequence belongs to the anion channel-forming bestrophin (TC 1.A.46) family. Calcium-sensitive chloride channel subfamily. As to expression, present in skeletal muscle and weakly in brain, spinal cord, bone marrow and retina.

It localises to the cell membrane. It catalyses the reaction chloride(in) = chloride(out). Functionally, ligand-gated anion channel that allows the movement of chloride monoatomic anions across cell membranes when activated by calcium (Ca2+). The protein is Bestrophin-3 of Homo sapiens (Human).